Reading from the N-terminus, the 378-residue chain is Polar flagellin B/D (378 aa).

Coiled coils occupy residues 103 to 128 (SNSK…RIAE) and 311 to 340 (AFQN…IKDT).

It belongs to the bacterial flagellin family. Heteromer of multiple flagellin subunits including FlaA, FlaB/D, FlaC, FlaE and FlaF.

It is found in the secreted. The protein resides in the bacterial flagellum. Functionally, flagellin is the subunit protein which polymerizes to form the filaments of bacterial flagella. FlaB/D is not essential for polar flagellar synthesis and swimming motility. Homomer of FlaB/D is not able to form a functional filament. This Vibrio parahaemolyticus serotype O3:K6 (strain RIMD 2210633) protein is Polar flagellin B/D (flaB).